We begin with the raw amino-acid sequence, 288 residues long: Elongation factor Ts (288 aa).

Positions 79-82 (TDFV) are involved in Mg(2+) ion dislocation from EF-Tu.

The protein belongs to the EF-Ts family.

The protein localises to the cytoplasm. Functionally, associates with the EF-Tu.GDP complex and induces the exchange of GDP to GTP. It remains bound to the aminoacyl-tRNA.EF-Tu.GTP complex up to the GTP hydrolysis stage on the ribosome. The polypeptide is Elongation factor Ts (Ehrlichia ruminantium (strain Gardel)).